We begin with the raw amino-acid sequence, 112 residues long: T cell receptor alpha variable 21 (112 aa).

The N-terminal stretch at 1-19 (METLLGLLILWLQLQWVSS) is a signal peptide. The Ig-like domain maps to 21–112 (QEVTQIPAAL…DSATYLCAVR (92 aa)). 2 N-linked (GlcNAc...) asparagine glycosylation sites follow: Asn-41 and Asn-82. Cys-42 and Cys-109 are oxidised to a cystine.

As to quaternary structure, alpha-beta TR is a heterodimer composed of an alpha and beta chain; disulfide-linked. The alpha-beta TR is associated with the transmembrane signaling CD3 coreceptor proteins to form the TR-CD3 (TcR or TCR). The assembly of alpha-beta TR heterodimers with CD3 occurs in the endoplasmic reticulum where a single alpha-beta TR heterodimer associates with one CD3D-CD3E heterodimer, one CD3G-CD3E heterodimer and one CD247 homodimer forming a stable octameric structure. CD3D-CD3E and CD3G-CD3E heterodimers preferentially associate with TR alpha and TR beta chains, respectively. The association of the CD247 homodimer is the last step of TcR assembly in the endoplasmic reticulum and is required for transport to the cell surface.

It is found in the cell membrane. Its function is as follows. V region of the variable domain of T cell receptor (TR) alpha chain that participates in the antigen recognition. Alpha-beta T cell receptors are antigen specific receptors which are essential to the immune response and are present on the cell surface of T lymphocytes. Recognize peptide-major histocompatibility (MH) (pMH) complexes that are displayed by antigen presenting cells (APC), a prerequisite for efficient T cell adaptive immunity against pathogens. Binding of alpha-beta TR to pMH complex initiates TR-CD3 clustering on the cell surface and intracellular activation of LCK that phosphorylates the ITAM motifs of CD3G, CD3D, CD3E and CD247 enabling the recruitment of ZAP70. In turn ZAP70 phosphorylates LAT, which recruits numerous signaling molecules to form the LAT signalosome. The LAT signalosome propagates signal branching to three major signaling pathways, the calcium, the mitogen-activated protein kinase (MAPK) kinase and the nuclear factor NF-kappa-B (NF-kB) pathways, leading to the mobilization of transcription factors that are critical for gene expression and essential for T cell growth and differentiation. The T cell repertoire is generated in the thymus, by V-(D)-J rearrangement. This repertoire is then shaped by intrathymic selection events to generate a peripheral T cell pool of self-MH restricted, non-autoaggressive T cells. Post-thymic interaction of alpha-beta TR with the pMH complexes shapes TR structural and functional avidity. The protein is T cell receptor alpha variable 21 of Homo sapiens (Human).